Consider the following 68-residue polypeptide: Large ribosomal subunit protein uL29 (68 aa).

It belongs to the universal ribosomal protein uL29 family.

This Rhodopseudomonas palustris (strain BisA53) protein is Large ribosomal subunit protein uL29.